Reading from the N-terminus, the 747-residue chain is Polyribonucleotide nucleotidyltransferase (747 aa).

Positions 487 and 493 each coordinate Mg(2+). The 60-residue stretch at 554 to 613 (PSTTTIKIDKDKIRDIIGPGGKVIKEICETSGAKIDISDDGSVSVYASDRDKLKVALDKI) folds into the KH domain. The region spanning 623 to 691 (GEIFNGTVMK…NKGKAKLTIK (69 aa)) is the S1 motif domain. The tract at residues 691–747 (KNADKDKSSNNPKPKNNVNNAKENSEPERRDSSKKRAWNEDSNNDKEEAITERKYFN) is disordered. The span at 699–712 (SNNPKPKNNVNNAK) shows a compositional bias: low complexity. Over residues 727–747 (AWNEDSNNDKEEAITERKYFN) the composition is skewed to basic and acidic residues.

This sequence belongs to the polyribonucleotide nucleotidyltransferase family. It depends on Mg(2+) as a cofactor.

It localises to the cytoplasm. The enzyme catalyses RNA(n+1) + phosphate = RNA(n) + a ribonucleoside 5'-diphosphate. Involved in mRNA degradation. Catalyzes the phosphorolysis of single-stranded polyribonucleotides processively in the 3'- to 5'-direction. This chain is Polyribonucleotide nucleotidyltransferase, found in Rickettsia felis (strain ATCC VR-1525 / URRWXCal2) (Rickettsia azadi).